Reading from the N-terminus, the 427-residue chain is Trigger factor (427 aa).

Residues 160 to 240 (GDTLIGDVTK…VKEVKRLELP (81 aa)) enclose the PPIase FKBP-type domain.

This sequence belongs to the FKBP-type PPIase family. Tig subfamily.

The protein localises to the cytoplasm. The catalysed reaction is [protein]-peptidylproline (omega=180) = [protein]-peptidylproline (omega=0). Functionally, involved in protein export. Acts as a chaperone by maintaining the newly synthesized protein in an open conformation. Functions as a peptidyl-prolyl cis-trans isomerase. This Chlorobaculum parvum (strain DSM 263 / NCIMB 8327) (Chlorobium vibrioforme subsp. thiosulfatophilum) protein is Trigger factor.